A 260-amino-acid chain; its full sequence is Phosphate import ATP-binding protein PstB 5 (260 aa).

The ABC transporter domain occupies 9-255 (IKVKDLSFYY…PLDSRTRDYV (247 aa)). Position 41–48 (41–48 (GPSGCGKS)) interacts with ATP.

Belongs to the ABC transporter superfamily. Phosphate importer (TC 3.A.1.7) family. In terms of assembly, the complex is composed of two ATP-binding proteins (PstB), two transmembrane proteins (PstC and PstA) and a solute-binding protein (PstS).

The protein resides in the cell inner membrane. It catalyses the reaction phosphate(out) + ATP + H2O = ADP + 2 phosphate(in) + H(+). Part of the ABC transporter complex PstSACB involved in phosphate import. Responsible for energy coupling to the transport system. This chain is Phosphate import ATP-binding protein PstB 5, found in Trichormus variabilis (strain ATCC 29413 / PCC 7937) (Anabaena variabilis).